Reading from the N-terminus, the 38-residue chain is Photosystem II reaction center protein L (38 aa).

The chain crosses the membrane as a helical span at residues 17 to 37 (SLFWGLLLIFVLAVLFSSYFF).

Belongs to the PsbL family. As to quaternary structure, PSII is composed of 1 copy each of membrane proteins PsbA, PsbB, PsbC, PsbD, PsbE, PsbF, PsbH, PsbI, PsbJ, PsbK, PsbL, PsbM, PsbT, PsbX, PsbY, PsbZ, Psb30/Ycf12, at least 3 peripheral proteins of the oxygen-evolving complex and a large number of cofactors. It forms dimeric complexes.

The protein localises to the plastid. It localises to the chloroplast thylakoid membrane. Functionally, one of the components of the core complex of photosystem II (PSII). PSII is a light-driven water:plastoquinone oxidoreductase that uses light energy to abstract electrons from H(2)O, generating O(2) and a proton gradient subsequently used for ATP formation. It consists of a core antenna complex that captures photons, and an electron transfer chain that converts photonic excitation into a charge separation. This subunit is found at the monomer-monomer interface and is required for correct PSII assembly and/or dimerization. The chain is Photosystem II reaction center protein L from Zygnema circumcarinatum (Green alga).